A 358-amino-acid chain; its full sequence is Variant-surface-glycoprotein phospholipase C (358 aa).

A PI-PLC X-box domain is found at Ile25–Arg198.

In terms of assembly, monomer. The N-terminus is blocked.

The protein resides in the membrane. It carries out the reaction a 6-(alpha-D-glucosaminyl)-1-(1,2-diacyl-sn-glycero-3-phospho)-1D-myo-inositol = 6-(alpha-D-glucosaminyl)-1D-myo-inositol 1,2-cyclic phosphate + a 1,2-diacyl-sn-glycerol. In terms of biological role, by hydrolysis of the attached glycolipid, releases soluble variant surface glycoprotein containing phosphoinositol from the cell wall of T.brucei after cell lysis. It also cleaves similar membrane anchors on some mammalian proteins. VSG lipase may play a role in processes such as parasite differentiation or antigenic variation. The polypeptide is Variant-surface-glycoprotein phospholipase C (Trypanosoma brucei brucei).